The sequence spans 156 residues: Small ribosomal subunit protein uS7 (156 aa).

It belongs to the universal ribosomal protein uS7 family. In terms of assembly, part of the 30S ribosomal subunit. Contacts proteins S9 and S11.

One of the primary rRNA binding proteins, it binds directly to 16S rRNA where it nucleates assembly of the head domain of the 30S subunit. Is located at the subunit interface close to the decoding center, probably blocks exit of the E-site tRNA. The sequence is that of Small ribosomal subunit protein uS7 from Rhodopseudomonas palustris (strain BisB18).